A 355-amino-acid polypeptide reads, in one-letter code: Uroporphyrinogen decarboxylase (355 aa).

Residues 27–31 (RQAGR), Asp-78, Tyr-155, Ser-210, and His-328 contribute to the substrate site.

It belongs to the uroporphyrinogen decarboxylase family. In terms of assembly, homodimer.

It is found in the cytoplasm. It carries out the reaction uroporphyrinogen III + 4 H(+) = coproporphyrinogen III + 4 CO2. It functions in the pathway porphyrin-containing compound metabolism; protoporphyrin-IX biosynthesis; coproporphyrinogen-III from 5-aminolevulinate: step 4/4. Its function is as follows. Catalyzes the decarboxylation of four acetate groups of uroporphyrinogen-III to yield coproporphyrinogen-III. The sequence is that of Uroporphyrinogen decarboxylase from Azotobacter vinelandii (strain DJ / ATCC BAA-1303).